The chain runs to 432 residues: Nuclear pore complex-interacting protein family member B8 (432 aa).

2 disordered regions span residues 260-280 (RMGR…NSLS) and 353-420 (SPLP…LRTR). Residues 270-280 (QQHSITDNSLS) show a composition bias toward polar residues. Basic and acidic residues predominate over residues 374 to 402 (EVEKPPKPKRWRVDEVEQSPKPKRQREAE). A compositionally biased stretch (basic residues) spans 408-420 (KPKRRRLSKLRTR).

This sequence belongs to the NPIP family.

The sequence is that of Nuclear pore complex-interacting protein family member B8 (NPIPB8) from Homo sapiens (Human).